Here is a 174-residue protein sequence, read N- to C-terminus: RNA pyrophosphohydrolase (174 aa).

In terms of domain architecture, Nudix hydrolase spans 6–149 (GFRANVGIII…KRDVYRKVMK (144 aa)). Positions 38 to 59 (GGVDDGESAEEAMYRELYEEVG) match the Nudix box motif.

This sequence belongs to the Nudix hydrolase family. RppH subfamily. Requires a divalent metal cation as cofactor.

In terms of biological role, accelerates the degradation of transcripts by removing pyrophosphate from the 5'-end of triphosphorylated RNA, leading to a more labile monophosphorylated state that can stimulate subsequent ribonuclease cleavage. The polypeptide is RNA pyrophosphohydrolase (Shewanella sp. (strain ANA-3)).